We begin with the raw amino-acid sequence, 43 residues long: Protein PsbN (43 aa).

A helical membrane pass occupies residues 5 to 27; it reads TLVAISISGSLVSFTGYALYTAF.

Belongs to the PsbN family.

It is found in the plastid. It localises to the chloroplast thylakoid membrane. Its function is as follows. May play a role in photosystem I and II biogenesis. This chain is Protein PsbN, found in Lactoris fernandeziana.